We begin with the raw amino-acid sequence, 394 residues long: MVRWLTAGESHGPALVATVEGLPAGIRVSSTDIGAELARRRLGHGRGARMKFEQDEIELLGGLRHGVSLGGPVSVVVRNTEWPKWERVMAPDPIDPAELEGLGRNAPLTRPRPGHADLAGMQKYGFDDARPVLERASARETAARVALGTVARALLRQAYGIEVVSHVVAIGAVEVPPGTPPPTSLAVVDADPVRCADPASSALMVAEIDAAHRDADTLGGIVEVLAYGCPPGLGSYVHGDRRLDARLAGELMGIQAIKGVEFGDGFRTARRRGSVAHDEIEPLEGPGRRVRRASDRAGGVEGGMTTGEPLRVRAAMKPISSLSKPLATIDVATGDPAVAIAQRSDVCAVPAAGVVAEAMVALVLAGAALEKFGGDSVEETRRNYEGYLKSLAVR.

NADP(+)-binding residues include R40 and R46. Residues 135–137, 255–256, G302, 317–321, and R343 each bind FMN; these read RAS, QA, and KPISS.

It belongs to the chorismate synthase family. In terms of assembly, homotetramer. The cofactor is FMNH2.

It catalyses the reaction 5-O-(1-carboxyvinyl)-3-phosphoshikimate = chorismate + phosphate. The protein operates within metabolic intermediate biosynthesis; chorismate biosynthesis; chorismate from D-erythrose 4-phosphate and phosphoenolpyruvate: step 7/7. Its function is as follows. Catalyzes the anti-1,4-elimination of the C-3 phosphate and the C-6 proR hydrogen from 5-enolpyruvylshikimate-3-phosphate (EPSP) to yield chorismate, which is the branch point compound that serves as the starting substrate for the three terminal pathways of aromatic amino acid biosynthesis. This reaction introduces a second double bond into the aromatic ring system. The protein is Chorismate synthase of Parafrankia sp. (strain EAN1pec).